A 420-amino-acid chain; its full sequence is Glutaryl-CoA dehydrogenase, mitochondrial (420 aa).

125–126 (RS) is a substrate binding site. FAD is bound by residues 164 to 167 (FGLT), S173, and 198 to 200 (WIT). S173 serves as a coordination point for substrate. Residues 273–277 (FSCLN) and R280 each bind substrate. E400 functions as the Proton acceptor in the catalytic mechanism. 2 residues coordinate FAD: T402 and F420.

This sequence belongs to the acyl-CoA dehydrogenase family. The cofactor is FAD.

The protein resides in the mitochondrion matrix. The catalysed reaction is glutaryl-CoA + oxidized [electron-transfer flavoprotein] + 2 H(+) = (2E)-butenoyl-CoA + reduced [electron-transfer flavoprotein] + CO2. Its pathway is amino-acid metabolism; lysine degradation. It participates in amino-acid metabolism; tryptophan metabolism. This is Glutaryl-CoA dehydrogenase, mitochondrial (gcdh) from Dictyostelium discoideum (Social amoeba).